The chain runs to 410 residues: 2-hydroxy-5-methyl-1-naphthoate 7-hydroxylase (410 aa).

Cys-350 lines the heme pocket.

It belongs to the cytochrome P450 family. It depends on heme as a cofactor.

It catalyses the reaction 2-hydroxy-5-methyl-1-naphthoate + 2 reduced [2Fe-2S]-[ferredoxin] + O2 + 2 H(+) = 2,7-dihydroxy-5-methyl-1-naphthoate + 2 oxidized [2Fe-2S]-[ferredoxin] + H2O. Its pathway is antibiotic biosynthesis. Its function is as follows. Involved in the biosynthesis of the naphthoic acid (NA) moiety in the chromophore of the enedyine antitumor antibiotic neocarzinostatin (NCS). Catalyzes the hydroxylation at C-7 position of 2-hydroxy-5-methyl-1-naphthoate to yield 2,7-dihydroxy-5-methyl-1-naphthoate. The protein is 2-hydroxy-5-methyl-1-naphthoate 7-hydroxylase of Streptomyces carzinostaticus.